The chain runs to 354 residues: Ion-translocating oxidoreductase complex subunit D (354 aa).

4 helical membrane passes run 19-39 (IMLL…YYFG), 40-60 (FGVL…EFLV), 77-99 (AAVT…LSFF), and 119-139 (IFNP…ILMT). At Thr-187 the chain carries FMN phosphoryl threonine. 5 consecutive transmembrane segments (helical) span residues 221–241 (WISI…FNVI), 245–265 (IPVS…YFFK), 268–288 (MYYP…FFIA), 295–315 (SITK…IWLI), and 319–339 (GNYP…VPLI).

Belongs to the NqrB/RnfD family. As to quaternary structure, the complex is composed of six subunits: RnfA, RnfB, RnfC, RnfD, RnfE and RnfG. FMN is required as a cofactor.

Its subcellular location is the cell inner membrane. Part of a membrane-bound complex that couples electron transfer with translocation of ions across the membrane. The sequence is that of Ion-translocating oxidoreductase complex subunit D from Buchnera aphidicola subsp. Baizongia pistaciae (strain Bp).